The chain runs to 377 residues: MDSIVDDAIDEAEDMGDGSAEVGGPTDINRSGTMTDDELQAVLKDLQTNITVVGCGGAGGNTVNRMHEEGIKGAKLVAANTDVQHLVEIGADTKILMGEQKTQGRGAGSLPQVGEEAALESQEEIYDAIEGSDMVFVTAGLGGGTGTGSAPVVAKAARESGALTIAIVTTPFTAEGEVRRTNAEAGLERLRDVSDTVIVVPNDRLLDAVGKLPVRQAFKVSDEVLMRSVKGITELITKPGLVNLDFADVKTVMERGGVAMIGLGESDSESKAQESVKSALRSPLLDVDISGANSALVNVTGGSDMSIEEAEGVVEEIYDRIDPDARIIWGTSVDDELEGMMRTMIVVTGVESPQIYGRNGEVQAQAEGRLEDIDYVE.

Positions 1 to 16 (MDSIVDDAIDEAEDMG) are enriched in acidic residues. Residues 1-33 (MDSIVDDAIDEAEDMGDGSAEVGGPTDINRSGT) are disordered. GTP is bound by residues 57 to 61 (GAGGN), 144 to 146 (GTG), Glu175, Arg179, and Asp222.

It belongs to the FtsZ family. As to quaternary structure, homodimer. Polymerizes to form a dynamic ring structure in a strictly GTP-dependent manner. Interacts directly with several other division proteins.

Its subcellular location is the cytoplasm. Its function is as follows. Essential cell division protein that forms a contractile ring structure (Z ring) at the future cell division site. The regulation of the ring assembly controls the timing and the location of cell division. One of the functions of the FtsZ ring is to recruit other cell division proteins to the septum to produce a new cell wall between the dividing cells. Binds GTP and shows GTPase activity. The sequence is that of Cell division protein FtsZ from Haloferax mediterranei (strain ATCC 33500 / DSM 1411 / JCM 8866 / NBRC 14739 / NCIMB 2177 / R-4) (Halobacterium mediterranei).